Consider the following 186-residue polypeptide: Transcription factor FapR (186 aa).

The protein belongs to the FapR family.

In terms of biological role, transcriptional factor involved in regulation of membrane lipid biosynthesis by repressing genes involved in fatty acid and phospholipid metabolism. The sequence is that of Transcription factor FapR from Halalkalibacterium halodurans (strain ATCC BAA-125 / DSM 18197 / FERM 7344 / JCM 9153 / C-125) (Bacillus halodurans).